The sequence spans 392 residues: Succinate--CoA ligase [ADP-forming] subunit beta (392 aa).

An ATP-grasp domain is found at 9 to 236 (KELFAAHGVP…PSAADPLEAK (228 aa)). ATP contacts are provided by residues Lys-45, 52-54 (GRG), Val-94, and Glu-99. Asn-191 and Asp-205 together coordinate Mg(2+). Substrate-binding positions include Asn-256 and 318-320 (GIT).

It belongs to the succinate/malate CoA ligase beta subunit family. As to quaternary structure, heterotetramer of two alpha and two beta subunits. It depends on Mg(2+) as a cofactor.

It carries out the reaction succinate + ATP + CoA = succinyl-CoA + ADP + phosphate. It catalyses the reaction GTP + succinate + CoA = succinyl-CoA + GDP + phosphate. It functions in the pathway carbohydrate metabolism; tricarboxylic acid cycle; succinate from succinyl-CoA (ligase route): step 1/1. Functionally, succinyl-CoA synthetase functions in the citric acid cycle (TCA), coupling the hydrolysis of succinyl-CoA to the synthesis of either ATP or GTP and thus represents the only step of substrate-level phosphorylation in the TCA. The beta subunit provides nucleotide specificity of the enzyme and binds the substrate succinate, while the binding sites for coenzyme A and phosphate are found in the alpha subunit. This Acidothermus cellulolyticus (strain ATCC 43068 / DSM 8971 / 11B) protein is Succinate--CoA ligase [ADP-forming] subunit beta.